The primary structure comprises 249 residues: Triosephosphate isomerase (249 aa).

9-11 (NWK) is a substrate binding site. The active-site Electrophile is the His94. Glu166 functions as the Proton acceptor in the catalytic mechanism. Substrate contacts are provided by residues Gly172 and 232 to 233 (GG).

The protein belongs to the triosephosphate isomerase family. As to quaternary structure, homodimer.

It localises to the cytoplasm. It carries out the reaction D-glyceraldehyde 3-phosphate = dihydroxyacetone phosphate. Its pathway is carbohydrate biosynthesis; gluconeogenesis. It participates in carbohydrate degradation; glycolysis; D-glyceraldehyde 3-phosphate from glycerone phosphate: step 1/1. Functionally, involved in the gluconeogenesis. Catalyzes stereospecifically the conversion of dihydroxyacetone phosphate (DHAP) to D-glyceraldehyde-3-phosphate (G3P). The polypeptide is Triosephosphate isomerase (Xylella fastidiosa (strain 9a5c)).